A 585-amino-acid chain; its full sequence is Archaeosine synthase (585 aa).

The PUA domain occupies 516–584; it reads TKTVEIDGFV…IGVEIRHVEE (69 aa).

The protein belongs to the archaeosine synthase type 1 family. Homodimer.

The catalysed reaction is 7-cyano-7-carbaguanosine(15) in tRNA + L-glutamine + H2O = archaeosine(15) in tRNA + L-glutamate. The protein operates within tRNA modification; archaeosine-tRNA biosynthesis. Functionally, is responsible for the final step in the biosynthesis of archaeosine, a modified nucleoside present in the dihydrouridine loop (D-loop) of archaeal tRNA. Catalyzes the conversion of 7-cyano-7-deazaguanine (preQ0)-modified tRNA to archaeosine-tRNA, transforming a nitrile group to a formamidine group. The polypeptide is Archaeosine synthase (Haloferax volcanii (strain ATCC 29605 / DSM 3757 / JCM 8879 / NBRC 14742 / NCIMB 2012 / VKM B-1768 / DS2) (Halobacterium volcanii)).